The sequence spans 133 residues: MSFWKTLQRQPRTISLFTNDIASNIKSQKCLQLLKGDVSHRFDVEIANRFPTWDQLQYMRTSCPQGPVSLQRQIPKLDSVLKYKHTDPTFGMDLQKCVQRGLWNPKEALWVDWENKLVGNEPADIDKYIIQRK.

A mitochondrion-targeting transit peptide spans 1–21; that stretch reads MSFWKTLQRQPRTISLFTNDI. C97 is a catalytic residue.

The protein belongs to the FMP46 family.

The protein resides in the mitochondrion. Putative mitochondrial redox protein which could be involved in the reduction of small toxic molecules. This chain is Putative redox protein FMP46, mitochondrial (FMP46), found in Saccharomyces cerevisiae (strain ATCC 204508 / S288c) (Baker's yeast).